Here is a 358-residue protein sequence, read N- to C-terminus: Vanillin synthase (358 aa).

Residues Met-1–Ala-21 form the signal peptide. Positions Gly-22–Ile-140 are cleaved as a propeptide — activation peptide. Asn-125 carries N-linked (GlcNAc...) asparagine glycosylation. Intrachain disulfides connect Cys-162-Cys-205 and Cys-196-Cys-238. Cys-165 is a catalytic residue. An N-linked (GlcNAc...) asparagine glycan is attached at Asn-254. Cys-296 and Cys-346 are disulfide-bonded. Residues His-305 and Asn-325 contribute to the active site.

This sequence belongs to the peptidase C1 family.

The catalysed reaction is (E)-ferulate + H2O = vanillin + acetate. The enzyme catalyses 4-O-beta-D-glucosyl-trans-ferulate + H2O = 4-O-beta-D-glucosyl-vanillin + acetate. Its pathway is aromatic compound metabolism; phenylpropanoid biosynthesis. In terms of biological role, involved in the biosynthesis of vanillin and derivative natural products. Catalyzes the double carbon bond cleavage of ferulic acid to vanillin and of respective glucosides. This is Vanillin synthase from Glechoma hederacea (Ground-ivy).